We begin with the raw amino-acid sequence, 99 residues long: Malonate decarboxylase acyl carrier protein (99 aa).

The residue at position 25 (Ser25) is an O-(phosphoribosyl dephospho-coenzyme A)serine.

Post-translationally, covalently binds the prosthetic group of malonate decarboxylase.

Its subcellular location is the cytoplasm. Its function is as follows. Subunit of malonate decarboxylase, it is an acyl carrier protein to which acetyl and malonyl thioester residues are bound via a 2'-(5''-phosphoribosyl)-3'-dephospho-CoA prosthetic group and turn over during the catalytic mechanism. The protein is Malonate decarboxylase acyl carrier protein (mdcC) of Klebsiella pneumoniae.